A 570-amino-acid polypeptide reads, in one-letter code: MRYTNYFIPTLKETPSDAEVVSHQLMLRAGMIRKLAAGIYNYLPLGLRSIRKVETIVREEMDRAGAIELLMPSVQPAELWQESTRWEQYGKELLRFKDRKDAEFCLGPTHEEVVTDIVRREVKSYRQMPFNLYQIQAKFRDEIRPRFGLMRGREFIMKDAYSFDVDSSASDLSYDKMYQAYRRIFQRCGLKFRAVEADTGSIGGSSSHEFMVLADSGEDAIVSCTQCEYAANVEKAEARPAPAEHAEPRPLEKVETPAKRSVEEVTAFLGIPSSALVKTLLVVADGTPVAALVRGDHDLNEIKLKHLLGCETLEMANEEMVTRVTGAPVGFAGPVGLNIKIVADLAVQGMKNFVTGANAGDLHLKNVTIGRDFTPTQYADIRNVVHGDPCPRCEAGHLELWRGIEVGHVFKLGTKYSEALRATYLDADGKEQIIFMGCYGIGISRTVAACIEQNHDADGIIFPIPIAPFHCIVSAVNTKDAEVMAACESLYLDLRAAGVEVLFDDRDERPGIKFKDADLIGIPLRLVVGSKNLADGKVELKSRRTGEVELLPLAGAVEKVRNIVAEALGR.

Residues 238-257 (ARPAPAEHAEPRPLEKVETP) form a disordered region.

Belongs to the class-II aminoacyl-tRNA synthetase family. ProS type 1 subfamily. As to quaternary structure, homodimer.

The protein localises to the cytoplasm. The catalysed reaction is tRNA(Pro) + L-proline + ATP = L-prolyl-tRNA(Pro) + AMP + diphosphate. In terms of biological role, catalyzes the attachment of proline to tRNA(Pro) in a two-step reaction: proline is first activated by ATP to form Pro-AMP and then transferred to the acceptor end of tRNA(Pro). As ProRS can inadvertently accommodate and process non-cognate amino acids such as alanine and cysteine, to avoid such errors it has two additional distinct editing activities against alanine. One activity is designated as 'pretransfer' editing and involves the tRNA(Pro)-independent hydrolysis of activated Ala-AMP. The other activity is designated 'posttransfer' editing and involves deacylation of mischarged Ala-tRNA(Pro). The misacylated Cys-tRNA(Pro) is not edited by ProRS. In Geobacter sulfurreducens (strain ATCC 51573 / DSM 12127 / PCA), this protein is Proline--tRNA ligase.